The primary structure comprises 440 residues: tRNA(Ile)-lysidine synthase (440 aa).

31–36 lines the ATP pocket; the sequence is SGGADS.

This sequence belongs to the tRNA(Ile)-lysidine synthase family.

The protein resides in the cytoplasm. The catalysed reaction is cytidine(34) in tRNA(Ile2) + L-lysine + ATP = lysidine(34) in tRNA(Ile2) + AMP + diphosphate + H(+). Functionally, ligates lysine onto the cytidine present at position 34 of the AUA codon-specific tRNA(Ile) that contains the anticodon CAU, in an ATP-dependent manner. Cytidine is converted to lysidine, thus changing the amino acid specificity of the tRNA from methionine to isoleucine. This chain is tRNA(Ile)-lysidine synthase, found in Borrelia garinii subsp. bavariensis (strain ATCC BAA-2496 / DSM 23469 / PBi) (Borreliella bavariensis).